We begin with the raw amino-acid sequence, 396 residues long: UPF0046 protein T07D4.2 (396 aa).

A disordered region spans residues 73-94 (SRRGSIASGIPMDKKTRRKLSN).

It belongs to the UPF0046 family.

The sequence is that of UPF0046 protein T07D4.2 from Caenorhabditis elegans.